The chain runs to 366 residues: Beta sliding clamp (366 aa).

Residues 1–125 (MKFTVEREHL…FPNLDDWQSE (125 aa)) form an i region. Residues 126–253 (VEFTLPQATM…YRRVLPKNPD (128 aa)) form an II region. Positions 254 to 366 (KHLEAGCDLL…AAYVVMPMRL (113 aa)) are III.

Belongs to the beta sliding clamp family. In terms of assembly, forms a ring-shaped head-to-tail homodimer around DNA which binds and tethers DNA polymerases and other proteins to the DNA. The DNA replisome complex has a single clamp-loading complex (3 tau and 1 each of delta, delta', psi and chi subunits) which binds 3 Pol III cores (1 core on the leading strand and 2 on the lagging strand) each with a beta sliding clamp dimer. Additional proteins in the replisome are other copies of gamma, psi and chi, Ssb, DNA helicase and RNA primase.

Its subcellular location is the cytoplasm. Confers DNA tethering and processivity to DNA polymerases and other proteins. Acts as a clamp, forming a ring around DNA (a reaction catalyzed by the clamp-loading complex) which diffuses in an ATP-independent manner freely and bidirectionally along dsDNA. Initially characterized for its ability to contact the catalytic subunit of DNA polymerase III (Pol III), a complex, multichain enzyme responsible for most of the replicative synthesis in bacteria; Pol III exhibits 3'-5' exonuclease proofreading activity. The beta chain is required for initiation of replication as well as for processivity of DNA replication. The polypeptide is Beta sliding clamp (dnaN) (Escherichia coli O157:H7).